A 424-amino-acid chain; its full sequence is MNHTDIAKRVYNHTWKLDPIVRSLLDTDFYKLLMLQMIWGLYPDVHVTFSLINRNKAIHLADDIDEGELRAQLDHTLSLRFTKKEIIWLAGNTFYGQKQIFKPDFLHWLENFQLPDYELSRKDGQYILHFHGSWAYSSMWEIPALTIISELRSRAAMKNLDRFALDVLYARAKAKMWSKIERLKKLPDIKISDFGTRRRHSFLWQRWCVEALKEGIGASFTGTSNVLLAMDTDLEALGTNAHELPMVIAALTNNDDDLRKAPYQVLQDWKRYYEGNLLIVLPDTFGTEAFLRNAPKWVADWTGFRPDSAPPIEGGERIIQWWQEQGKKPQEKLLIFSDALDVDTIEKTYHHFHGKVRMIFGWGTNLTNDFANCAPQEIADLDVTSLVCKVTSANGRPAVKLSDNPEKTIGNPQEIQRYLNFFSH.

His-242 is subject to Phosphohistidine; by autocatalysis.

This sequence belongs to the NAPRTase family. Transiently phosphorylated on a His residue during the reaction cycle. Phosphorylation strongly increases the affinity for substrates and increases the rate of nicotinate D-ribonucleotide production. Dephosphorylation regenerates the low-affinity form of the enzyme, leading to product release.

The catalysed reaction is nicotinate + 5-phospho-alpha-D-ribose 1-diphosphate + ATP + H2O = nicotinate beta-D-ribonucleotide + ADP + phosphate + diphosphate. The protein operates within cofactor biosynthesis; NAD(+) biosynthesis; nicotinate D-ribonucleotide from nicotinate: step 1/1. In terms of biological role, catalyzes the synthesis of beta-nicotinate D-ribonucleotide from nicotinate and 5-phospho-D-ribose 1-phosphate at the expense of ATP. This chain is Nicotinate phosphoribosyltransferase, found in Bartonella bacilliformis (strain ATCC 35685 / KC583 / Herrer 020/F12,63).